The chain runs to 558 residues: Glypican-1 (558 aa).

The N-terminal stretch at 1-23 (MELRARGWWLLCAAAALVACTRG) is a signal peptide. 7 disulfides stabilise this stretch: cysteine 32-cysteine 68, cysteine 62-cysteine 256, cysteine 69-cysteine 259, cysteine 191-cysteine 343, cysteine 246-cysteine 279, cysteine 268-cysteine 415, and cysteine 272-cysteine 401. 2 N-linked (GlcNAc...) asparagine glycosylation sites follow: asparagine 79 and asparagine 116. Residues 478 to 531 (FQDASDDGSGSGSGGGCPDDACGRRVSKKSSSSRTPLIHALPGLSEQEGQKTSA) are disordered. Serine 486, serine 488, and serine 490 each carry an O-linked (Xyl...) (heparan sulfate) serine glycan. Serine 530 carries GPI-anchor amidated serine lipidation. Residues 531–558 (AATRPEPHYFFLLFLFTLVLAAARPRWR) constitute a propeptide, removed in mature form.

Belongs to the glypican family. In terms of processing, S-nitrosylated in a Cu(2+)-dependent manner. Nitric acid (NO) is released from the nitrosylated cysteines by ascorbate or by some other reducing agent, in a Cu(2+) or Zn(2+) dependent manner. This free nitric oxide is then capable of cleaving the heparan sulfate side chains. N- and O-glycosylated. N-glycosylation is mainly of the complex type containing sialic acid. O-glycosylated with heparan sulfate. The heparan sulfate chains can be cleaved either by the action of heparanase or, degraded by a deaminative process that uses nitric oxide (NO) released from the S-nitrosylated cysteines. This process is triggered by ascorbate, or by some other reducing agent, in a Cu(2+)- or Zn(2+) dependent manner. Cu(2+) ions are provided by ceruloproteins such as APP, PRNP or CP which associate with GCP1 in intracellular compartments or lipid rafts. Post-translationally, this cell-associated glypican is further processed to give rise to a medium-released species. In terms of tissue distribution, nervous system.

The protein resides in the cell membrane. It is found in the endosome. It localises to the secreted. Its subcellular location is the extracellular space. Cell surface proteoglycan that bears heparan sulfate. May act as a catalyst in increasing the rate of conversion of prion protein PRPN(C) to PRNP(Sc) via associating (via the heparan sulfate side chains) with both forms of PRPN, targeting them to lipid rafts and facilitating their interaction. Required for proper skeletal muscle differentiation by sequestering FGF2 in lipid rafts preventing its binding to receptors (FGFRs) and inhibiting the FGF-mediated signaling. Binds Cu(2+) or Zn(2+) ions. Binds, via the heparan sulfate side chains, alpha-4 (V) collagen and participates in Schwann cell myelination. This Rattus norvegicus (Rat) protein is Glypican-1 (Gpc1).